Consider the following 835-residue polypeptide: Probable alpha-glucuronidase A (835 aa).

The first 18 residues, 1 to 18, serve as a signal peptide directing secretion; sequence MRWSFLTVLLWLVSLTGA. N-linked (GlcNAc...) asparagine glycans are attached at residues asparagine 49, asparagine 101, asparagine 148, asparagine 221, asparagine 278, asparagine 309, asparagine 342, asparagine 460, asparagine 522, asparagine 571, asparagine 677, and asparagine 727.

Belongs to the glycosyl hydrolase 67 family.

It localises to the secreted. It catalyses the reaction an alpha-D-glucuronoside + H2O = D-glucuronate + an alcohol. Its function is as follows. Alpha-glucuronidase involved in the hydrolysis of xylan, a major structural heterogeneous polysaccharide found in plant biomass representing the second most abundant polysaccharide in the biosphere, after cellulose. Releases 4-O-methylglucuronic acid from xylan. The sequence is that of Probable alpha-glucuronidase A (aguA) from Aspergillus oryzae (strain ATCC 42149 / RIB 40) (Yellow koji mold).